A 239-amino-acid chain; its full sequence is Probable transcriptional regulatory protein LMOf2365_0385 (239 aa).

The protein belongs to the TACO1 family. YeeN subfamily.

The protein localises to the cytoplasm. This Listeria monocytogenes serotype 4b (strain F2365) protein is Probable transcriptional regulatory protein LMOf2365_0385.